Here is a 488-residue protein sequence, read N- to C-terminus: Germacrene A acid 8-beta-hydroxylase (488 aa).

Residues 2 to 22 (ELFTIFSIVVSSLILFTFWSL) traverse the membrane as a helical; Signal-anchor for type II membrane protein segment. N407 carries an N-linked (GlcNAc...) asparagine glycan. Residue C429 participates in heme binding.

The protein belongs to the cytochrome P450 family. Heme serves as cofactor. Expressed in leaf primordia.

It is found in the membrane. It carries out the reaction germacra-1(10),4,11(13)-trien-12-oate + reduced [NADPH--hemoprotein reductase] + O2 = 8beta-hydroxygermacra-1(10),4,11(13)-trien-12-oate + oxidized [NADPH--hemoprotein reductase] + H2O + H(+). It participates in secondary metabolite biosynthesis; terpenoid biosynthesis. Involved in the biosynthesis of germacrene-derived sesquiterpene lactones. Hydroxylates germacrene A acid to 8-beta-hydroxy-germacrene A acid. Unlike 6-alpha-hydroxy-germacrene A acid, this compound cannot undergo spontaneous lactonization. This Helianthus annuus (Common sunflower) protein is Germacrene A acid 8-beta-hydroxylase.